Reading from the N-terminus, the 129-residue chain is MPTYNQLVRFGRKSKTRKTKSPALESNPFKSGVCLVVKTVTPKKPNSALRKIATVRLSNKRTVNAYIPGEKHSVKEHDRVLVRGGQVPDLPGVKYHIVLGAYDIAGVKGRKQGRSRYGAPRKQVAVTKK.

Disordered regions lie at residues 1–25 and 110–129; these read MPTY…PALE and RKQG…VTKK. The segment covering 10 to 20 has biased composition (basic residues); sequence FGRKSKTRKTK.

The protein belongs to the universal ribosomal protein uS12 family. Part of the 30S ribosomal subunit. Contacts proteins S8 and S17. May interact with IF1 in the 30S initiation complex.

In terms of biological role, with S4 and S5 plays an important role in translational accuracy. Interacts with and stabilizes bases of the 16S rRNA that are involved in tRNA selection in the A site and with the mRNA backbone. Located at the interface of the 30S and 50S subunits, it traverses the body of the 30S subunit contacting proteins on the other side and probably holding the rRNA structure together. The combined cluster of proteins S8, S12 and S17 appears to hold together the shoulder and platform of the 30S subunit. The polypeptide is Small ribosomal subunit protein uS12 (Rickettsia conorii (strain ATCC VR-613 / Malish 7)).